The chain runs to 180 residues: Inosine/xanthosine triphosphatase (180 aa).

A substrate-binding site is contributed by 8–13; it reads TTNPAK. Positions 38 and 68 each coordinate Mg(2+). 68–69 contacts substrate; it reads EA.

The protein belongs to the YjjX NTPase family. In terms of assembly, homodimer. It depends on Mg(2+) as a cofactor. The cofactor is Mn(2+).

It catalyses the reaction XTP + H2O = XDP + phosphate + H(+). It carries out the reaction ITP + H2O = IDP + phosphate + H(+). Its function is as follows. Phosphatase that hydrolyzes non-canonical purine nucleotides such as XTP and ITP to their respective diphosphate derivatives. Probably excludes non-canonical purines from DNA/RNA precursor pool, thus preventing their incorporation into DNA/RNA and avoiding chromosomal lesions. The protein is Inosine/xanthosine triphosphatase of Yersinia pseudotuberculosis serotype IB (strain PB1/+).